Here is a 228-residue protein sequence, read N- to C-terminus: Enolase-phosphatase E1 (228 aa).

This sequence belongs to the HAD-like hydrolase superfamily. MasA/MtnC family. Monomer. Mg(2+) serves as cofactor.

The enzyme catalyses 5-methylsulfanyl-2,3-dioxopentyl phosphate + H2O = 1,2-dihydroxy-5-(methylsulfanyl)pent-1-en-3-one + phosphate. Its pathway is amino-acid biosynthesis; L-methionine biosynthesis via salvage pathway; L-methionine from S-methyl-5-thio-alpha-D-ribose 1-phosphate: step 3/6. It functions in the pathway amino-acid biosynthesis; L-methionine biosynthesis via salvage pathway; L-methionine from S-methyl-5-thio-alpha-D-ribose 1-phosphate: step 4/6. Functionally, bifunctional enzyme that catalyzes the enolization of 2,3-diketo-5-methylthiopentyl-1-phosphate (DK-MTP-1-P) into the intermediate 2-hydroxy-3-keto-5-methylthiopentenyl-1-phosphate (HK-MTPenyl-1-P), which is then dephosphorylated to form the acireductone 1,2-dihydroxy-3-keto-5-methylthiopentene (DHK-MTPene). The protein is Enolase-phosphatase E1 of Picosynechococcus sp. (strain ATCC 27264 / PCC 7002 / PR-6) (Agmenellum quadruplicatum).